A 500-amino-acid polypeptide reads, in one-letter code: Melanopsin (500 aa).

Residues 1 to 65 (MSHHSSWRGH…TVDVPDHAHY (65 aa)) lie on the Extracellular side of the membrane. Asparagine 18 carries an N-linked (GlcNAc...) asparagine glycan. A helical membrane pass occupies residues 66–86 (IIGAVILIVGITGVIGNALVI). Residues 87 to 101 (YVFCRSRTLRTAGNM) lie on the Cytoplasmic side of the membrane. Residues 102 to 122 (FVVNLAVADFFMSLTQSPVFF) traverse the membrane as a helical segment. The Extracellular portion of the chain corresponds to 123–138 (AASLHRRWIFGERICE). The cysteines at positions 137 and 215 are disulfide-linked. The chain crosses the membrane as a helical span at residues 139 to 159 (LYAFCGALFGICSMMTLTAIA). The Cytoplasmic portion of the chain corresponds to 160-182 (ADRCLAITQPLALVGNVSRRKAG). Residues 183 to 203 (AVLAVVWLYSLGWSLPPFFGW) traverse the membrane as a helical segment. The Extracellular segment spans residues 204 to 232 (SAYVPEGLQTSCSWDYMTFTPSVRAYTIL). The chain crosses the membrane as a helical span at residues 233–253 (LFIFVFFIPLGIIVSCYVGIF). The Cytoplasmic portion of the chain corresponds to 254 to 286 (QAIRAMGKEIRELDCGETQKVYERMQNEWKMAK). Residues 287–307 (IALLVILLFVISWSPYSVVAL) traverse the membrane as a helical segment. Residues 308–322 (TATAGYSHLLTPYMN) are Extracellular-facing. Residues 323–343 (SVPAVIAKASAIHNPIIYAIT) form a helical membrane-spanning segment. Lysine 330 bears the N6-(retinylidene)lysine mark. Residues 344–500 (HPKYRAAIAR…DGKALLLGGN (157 aa)) lie on the Cytoplasmic side of the membrane. Disordered stretches follow at residues 406 to 428 (GKKR…ADGS), 448 to 470 (VILS…AHKV), and 481 to 500 (ETDS…LGGN). Polar residues-rich tracts occupy residues 411-428 (SSAS…ADGS) and 448-462 (VILS…ASGQ).

This sequence belongs to the G-protein coupled receptor 1 family. Opsin subfamily. Expressed in a subset of retinal horizontal cells as well as in retinal ganglion cells.

It is found in the cell membrane. Photoreceptor implicated in non-image-forming responses to light. The sequence is that of Melanopsin (opn4) from Rutilus rutilus (Roach).